Here is a 455-residue protein sequence, read N- to C-terminus: UDP-N-acetylmuramoylalanine--D-glutamate ligase (455 aa).

Residue 112–118 (GTNGKTT) participates in ATP binding.

This sequence belongs to the MurCDEF family.

Its subcellular location is the cytoplasm. The enzyme catalyses UDP-N-acetyl-alpha-D-muramoyl-L-alanine + D-glutamate + ATP = UDP-N-acetyl-alpha-D-muramoyl-L-alanyl-D-glutamate + ADP + phosphate + H(+). It participates in cell wall biogenesis; peptidoglycan biosynthesis. Functionally, cell wall formation. Catalyzes the addition of glutamate to the nucleotide precursor UDP-N-acetylmuramoyl-L-alanine (UMA). The sequence is that of UDP-N-acetylmuramoylalanine--D-glutamate ligase from Trichormus variabilis (strain ATCC 29413 / PCC 7937) (Anabaena variabilis).